A 187-amino-acid polypeptide reads, in one-letter code: MSSREITILKIQEPTRSIASLTRIMEEELSQYRKTLPKGFREEVDCDEDTVLFLHVDFLPLDFQKTTELLLTGKKNLVPVVAIDLQGQILMQAFGNEESQTLSLKTGYAHYFSRSRNQLWKKGDTSGHTQKILQILSPTDRSFLVYQVEQEVAACHEGYYSCFFRERMEGVTWKLLPVPRNFLPEKS.

Belongs to the PRA-CH family. Homodimer.

It localises to the cytoplasm. The enzyme catalyses 1-(5-phospho-beta-D-ribosyl)-5'-AMP + H2O = 1-(5-phospho-beta-D-ribosyl)-5-[(5-phospho-beta-D-ribosylamino)methylideneamino]imidazole-4-carboxamide. It participates in amino-acid biosynthesis; L-histidine biosynthesis; L-histidine from 5-phospho-alpha-D-ribose 1-diphosphate: step 3/9. Functionally, catalyzes the hydrolysis of the adenine ring of phosphoribosyl-AMP. This Leptospira interrogans serogroup Icterohaemorrhagiae serovar Lai (strain 56601) protein is Phosphoribosyl-AMP cyclohydrolase (hisI).